Reading from the N-terminus, the 901-residue chain is Protein translocase subunit SecA (901 aa).

Residues glutamine 87, glycine 105–threonine 109, and aspartate 512 each bind ATP. The tract at residues histidine 859 to glutamine 901 is disordered. 4 residues coordinate Zn(2+): cysteine 885, cysteine 887, cysteine 896, and histidine 897. A compositionally biased stretch (basic residues) spans lysine 891 to glutamine 901.

Belongs to the SecA family. Monomer and homodimer. Part of the essential Sec protein translocation apparatus which comprises SecA, SecYEG and auxiliary proteins SecDF-YajC and YidC. It depends on Zn(2+) as a cofactor.

It localises to the cell inner membrane. The protein resides in the cytoplasm. It catalyses the reaction ATP + H2O + cellular proteinSide 1 = ADP + phosphate + cellular proteinSide 2.. Part of the Sec protein translocase complex. Interacts with the SecYEG preprotein conducting channel. Has a central role in coupling the hydrolysis of ATP to the transfer of proteins into and across the cell membrane, serving both as a receptor for the preprotein-SecB complex and as an ATP-driven molecular motor driving the stepwise translocation of polypeptide chains across the membrane. This chain is Protein translocase subunit SecA, found in Escherichia coli O6:K15:H31 (strain 536 / UPEC).